A 157-amino-acid chain; its full sequence is uncharacterized protein (157 aa).

This is an uncharacterized protein from Acidianus hospitalis (AFV-1).